The sequence spans 453 residues: Growth/differentiation factor 9 (453 aa).

Positions 1–27 are cleaved as a signal peptide; the sequence is MALPNKFFLWFCCFAWLCFPISLDSLP. A propeptide spanning residues 28–318 is cleaved from the precursor; sequence SRGEAQIVAR…EGVRSSRHRR (291 aa). 4 N-linked (GlcNAc...) asparagine glycosylation sites follow: N163, N236, N255, and N269. The interval 282–328 is disordered; the sequence is LHPKRKPSQGPDQRRELSAYPVGEEAAEGVRSSRHRRDQESVSSELK. Positions 318 to 328 are enriched in basic and acidic residues; the sequence is RDQESVSSELK. Residue N337 is glycosylated (N-linked (GlcNAc...) asparagine). Intrachain disulfides connect C352/C418, C381/C450, and C385/C452.

This sequence belongs to the TGF-beta family. Homodimer or heterodimer (Potential). But, in contrast to other members of this family, cannot be disulfide-linked. Post-translationally, phosphorylated; phosphorylation is critical for GDF9 function.

The protein resides in the secreted. Required for ovarian folliculogenesis. The sequence is that of Growth/differentiation factor 9 (GDF9) from Capra hircus (Goat).